Consider the following 182-residue polypeptide: Troponin I, fast skeletal muscle (182 aa).

An N-acetylglycine modification is found at Gly-2. The interval 2–48 is involved in binding TNC; sequence GDEEKRNRAITARRQHLKSVMLQIAATELEKEESRREAEKQNYLAEH. Position 12 is a phosphothreonine (Thr-12). Residues 97-117 are involved in binding TNC and actin; sequence NQKLFDLRGKFKRPPLRRVRM. The residue at position 118 (Ser-118) is a Phosphoserine.

Belongs to the troponin I family. In terms of assembly, binds to actin and tropomyosin.

Its function is as follows. Troponin I is the inhibitory subunit of troponin, the thin filament regulatory complex which confers calcium-sensitivity to striated muscle actomyosin ATPase activity. This is Troponin I, fast skeletal muscle (TNNI2) from Homo sapiens (Human).